A 272-amino-acid chain; its full sequence is Dihydropteroate synthase (272 aa).

Residues 1–251 enclose the Pterin-binding domain; it reads MIKTKIMGIL…GVRVHNVLLN (251 aa). Asn-11 serves as a coordination point for Mg(2+). Residues Thr-51, Asp-89, Asn-108, Asp-172, Lys-208, and 244–246 contribute to the (7,8-dihydropterin-6-yl)methyl diphosphate site; that span reads RVH.

Belongs to the DHPS family. As to quaternary structure, homodimer. Mg(2+) is required as a cofactor.

It catalyses the reaction (7,8-dihydropterin-6-yl)methyl diphosphate + 4-aminobenzoate = 7,8-dihydropteroate + diphosphate. Its pathway is cofactor biosynthesis; tetrahydrofolate biosynthesis; 7,8-dihydrofolate from 2-amino-4-hydroxy-6-hydroxymethyl-7,8-dihydropteridine diphosphate and 4-aminobenzoate: step 1/2. In terms of biological role, catalyzes the condensation of para-aminobenzoate (pABA) with 6-hydroxymethyl-7,8-dihydropterin diphosphate (DHPt-PP) to form 7,8-dihydropteroate (H2Pte), the immediate precursor of folate derivatives. The chain is Dihydropteroate synthase (folP) from Staphylococcus epidermidis (strain ATCC 35984 / DSM 28319 / BCRC 17069 / CCUG 31568 / BM 3577 / RP62A).